Reading from the N-terminus, the 103-residue chain is Putative membrane protein insertion efficiency factor (103 aa).

This sequence belongs to the UPF0161 family.

The protein resides in the cell inner membrane. In terms of biological role, could be involved in insertion of integral membrane proteins into the membrane. This is Putative membrane protein insertion efficiency factor from Chlamydia abortus (strain DSM 27085 / S26/3) (Chlamydophila abortus).